Reading from the N-terminus, the 454-residue chain is Tryptophanase (454 aa).

K256 is modified (N6-(pyridoxal phosphate)lysine).

It belongs to the beta-eliminating lyase family. In terms of assembly, homotetramer. Requires pyridoxal 5'-phosphate as cofactor.

The catalysed reaction is L-tryptophan + H2O = indole + pyruvate + NH4(+). It functions in the pathway amino-acid degradation; L-tryptophan degradation via pyruvate pathway; indole and pyruvate from L-tryptophan: step 1/1. This chain is Tryptophanase (tnaA), found in Rhodobacter capsulatus (Rhodopseudomonas capsulata).